We begin with the raw amino-acid sequence, 185 residues long: NADH-quinone oxidoreductase subunit B (185 aa).

[4Fe-4S] cluster-binding residues include Cys-38, Cys-39, Cys-104, and Cys-133. Basic and acidic residues predominate over residues 165 to 176 (AAEAYREEERQA). The segment at 165-185 (AAEAYREEERQAARSALGPRS) is disordered.

The protein belongs to the complex I 20 kDa subunit family. As to quaternary structure, NDH-1 is composed of 14 different subunits. Subunits NuoB, C, D, E, F, and G constitute the peripheral sector of the complex. [4Fe-4S] cluster serves as cofactor.

Its subcellular location is the cell membrane. The enzyme catalyses a quinone + NADH + 5 H(+)(in) = a quinol + NAD(+) + 4 H(+)(out). Functionally, NDH-1 shuttles electrons from NADH, via FMN and iron-sulfur (Fe-S) centers, to quinones in the respiratory chain. The immediate electron acceptor for the enzyme in this species is believed to be ubiquinone. Couples the redox reaction to proton translocation (for every two electrons transferred, four hydrogen ions are translocated across the cytoplasmic membrane), and thus conserves the redox energy in a proton gradient. In Thermomicrobium roseum (strain ATCC 27502 / DSM 5159 / P-2), this protein is NADH-quinone oxidoreductase subunit B.